Here is a 279-residue protein sequence, read N- to C-terminus: 3-methyl-2-oxobutanoate hydroxymethyltransferase (279 aa).

Mg(2+) is bound by residues aspartate 43 and aspartate 82. 3-methyl-2-oxobutanoate-binding positions include 43-44 (DS), aspartate 82, and lysine 112. Glutamate 114 is a binding site for Mg(2+). Catalysis depends on glutamate 181, which acts as the Proton acceptor.

This sequence belongs to the PanB family. As to quaternary structure, homodecamer; pentamer of dimers. The cofactor is Mg(2+).

Its subcellular location is the cytoplasm. It catalyses the reaction 3-methyl-2-oxobutanoate + (6R)-5,10-methylene-5,6,7,8-tetrahydrofolate + H2O = 2-dehydropantoate + (6S)-5,6,7,8-tetrahydrofolate. The protein operates within cofactor biosynthesis; (R)-pantothenate biosynthesis; (R)-pantoate from 3-methyl-2-oxobutanoate: step 1/2. In terms of biological role, catalyzes the reversible reaction in which hydroxymethyl group from 5,10-methylenetetrahydrofolate is transferred onto alpha-ketoisovalerate to form ketopantoate. This chain is 3-methyl-2-oxobutanoate hydroxymethyltransferase, found in Halalkalibacterium halodurans (strain ATCC BAA-125 / DSM 18197 / FERM 7344 / JCM 9153 / C-125) (Bacillus halodurans).